The chain runs to 476 residues: MIRKSATGVIVALAVIWGGGTWYTGTQIQPGVEKFIKDFNDAKKKGEHAYDMTLSYQNFDKGFFNSRFQMQMTFDNGAPDLNIKPGQKVVFDVDVEHGPLPITMLMHGNVIPALAAAKVNLVNNELTQPLFIAAKNKSPVEATLRFAFGGSFSTTLDVAPAEYGKFSFGEGQFTFNGDGSSLSNLDIEGKVEDIVLQLSPMNKVTAKSFTIDSLARLEEKKFPVGESESKFNQINIINHGEDVAQIDAFVAKTRLDRVKDKDYINVNLTYELDKLTKGNQQLGSGEWSLIAESIDPSAVRQFIIQYNIAMQKQLAAHPELANDEVALQEVNAALFKEYLPLLQKSEPTIKQPVRWKNALGELNANLDISIADPAKSSSSTNKDIKSLNFDVKLPLNVVTETAKQLNLSEGMDAEKAQKQADKQISGMMTLGQMFQLITIDNNTASLQLRYTPGKVVFNGQEMSEEEFMSRAGRFVH.

The first 24 residues, 1–24 (MIRKSATGVIVALAVIWGGGTWYT), serve as a signal peptide directing secretion.

To E.coli YdgA and H.influenzae HI_1236.

This is an uncharacterized protein from Escherichia coli (strain K12).